The sequence spans 505 residues: Cytochrome P450 71A2 (505 aa).

Residues 7-27 (WYSLLIPLFVFIFLLIHHCFF) traverse the membrane as a helical segment. Residue cysteine 448 coordinates heme.

The protein belongs to the cytochrome P450 family. Requires heme as cofactor.

The protein localises to the membrane. Functionally, may have a role in maturation, such as during flavor formation or other metabolite production specific to aging tissues. The polypeptide is Cytochrome P450 71A2 (CYP71A2) (Solanum melongena (Eggplant)).